A 542-amino-acid polypeptide reads, in one-letter code: CTP synthase (542 aa).

The tract at residues 1–265 (MARYVFITGG…DSEVLCAFGI (265 aa)) is amidoligase domain. Residue Ser13 participates in CTP binding. Residue Ser13 participates in UTP binding. 14–19 (SLGKGI) serves as a coordination point for ATP. Tyr54 lines the L-glutamine pocket. Asp71 is an ATP binding site. 2 residues coordinate Mg(2+): Asp71 and Glu139. Residues 146–148 (DIE), 186–191 (KTKPTQ), and Lys222 contribute to the CTP site. UTP-binding positions include 186–191 (KTKPTQ) and Lys222. A Glutamine amidotransferase type-1 domain is found at 291–541 (TIAVVGKYTG…IEAAVEQSRL (251 aa)). Ala353 is a binding site for L-glutamine. The Nucleophile; for glutamine hydrolysis role is filled by Cys380. Residues 381–384 (FGMQ), Glu404, and Arg469 each bind L-glutamine. Catalysis depends on residues His514 and Glu516.

Belongs to the CTP synthase family. Homotetramer.

It catalyses the reaction UTP + L-glutamine + ATP + H2O = CTP + L-glutamate + ADP + phosphate + 2 H(+). The enzyme catalyses L-glutamine + H2O = L-glutamate + NH4(+). The catalysed reaction is UTP + NH4(+) + ATP = CTP + ADP + phosphate + 2 H(+). The protein operates within pyrimidine metabolism; CTP biosynthesis via de novo pathway; CTP from UDP: step 2/2. Allosterically activated by GTP, when glutamine is the substrate; GTP has no effect on the reaction when ammonia is the substrate. The allosteric effector GTP functions by stabilizing the protein conformation that binds the tetrahedral intermediate(s) formed during glutamine hydrolysis. Inhibited by the product CTP, via allosteric rather than competitive inhibition. In terms of biological role, catalyzes the ATP-dependent amination of UTP to CTP with either L-glutamine or ammonia as the source of nitrogen. Regulates intracellular CTP levels through interactions with the four ribonucleotide triphosphates. This is CTP synthase from Bartonella tribocorum (strain CIP 105476 / IBS 506).